Consider the following 233-residue polypeptide: Protein DEHYDRATION-INDUCED 19 homolog 2 (233 aa).

The tract at residues 176–215 (DLHSDSSDNNFLLNKFPDDKTAERAEPSLSEKDQKERAQR) is disordered. A compositionally biased stretch (basic and acidic residues) spans 191–214 (FPDDKTAERAEPSLSEKDQKERAQ).

It belongs to the Di19 family.

The chain is Protein DEHYDRATION-INDUCED 19 homolog 2 (DI19-2) from Oryza sativa subsp. japonica (Rice).